The sequence spans 323 residues: L-lactate dehydrogenase (323 aa).

NAD(+) contacts are provided by V12, D33, and Y65. Substrate is bound by residues R94 and 126–129; that span reads NPCD. T149 is an NAD(+) binding site. 154 to 157 is a binding site for substrate; that stretch reads ETMR. H181 serves as the catalytic Proton acceptor. T234 lines the substrate pocket.

The protein belongs to the LDH/MDH superfamily. LDH family. Homotetramer.

Its subcellular location is the cytoplasm. It catalyses the reaction (S)-lactate + NAD(+) = pyruvate + NADH + H(+). It participates in fermentation; pyruvate fermentation to lactate; (S)-lactate from pyruvate: step 1/1. Functionally, catalyzes the conversion of lactate to pyruvate. The polypeptide is L-lactate dehydrogenase (Mycoplasmoides gallisepticum (strain R(low / passage 15 / clone 2)) (Mycoplasma gallisepticum)).